The chain runs to 184 residues: Threonylcarbamoyl-AMP synthase (184 aa).

A YrdC-like domain is found at 3 to 184 (AWFIQKAVSV…DAATGAILRQ (182 aa)).

It belongs to the SUA5 family. TsaC subfamily.

The protein localises to the cytoplasm. The catalysed reaction is L-threonine + hydrogencarbonate + ATP = L-threonylcarbamoyladenylate + diphosphate + H2O. Its function is as follows. Required for the formation of a threonylcarbamoyl group on adenosine at position 37 (t(6)A37) in tRNAs that read codons beginning with adenine. Catalyzes the conversion of L-threonine, HCO(3)(-)/CO(2) and ATP to give threonylcarbamoyl-AMP (TC-AMP) as the acyladenylate intermediate, with the release of diphosphate. The sequence is that of Threonylcarbamoyl-AMP synthase from Hahella chejuensis (strain KCTC 2396).